The sequence spans 635 residues: Threonine--tRNA ligase (635 aa).

Positions 1–61 (MIQITLPDNS…DHDARLQIIT (61 aa)) constitute a TGS domain. Residues 242-533 (DHRKLGKELD…LIEHHAGALP (292 aa)) are catalytic. 3 residues coordinate Zn(2+): C333, H384, and H510.

The protein belongs to the class-II aminoacyl-tRNA synthetase family. As to quaternary structure, homodimer. The cofactor is Zn(2+).

It is found in the cytoplasm. The enzyme catalyses tRNA(Thr) + L-threonine + ATP = L-threonyl-tRNA(Thr) + AMP + diphosphate + H(+). Functionally, catalyzes the attachment of threonine to tRNA(Thr) in a two-step reaction: L-threonine is first activated by ATP to form Thr-AMP and then transferred to the acceptor end of tRNA(Thr). Also edits incorrectly charged L-seryl-tRNA(Thr). This chain is Threonine--tRNA ligase, found in Variovorax paradoxus (strain S110).